We begin with the raw amino-acid sequence, 325 residues long: Tetraacyldisaccharide 4'-kinase (325 aa).

55-62 (TAGGNGKT) serves as a coordination point for ATP.

It belongs to the LpxK family.

The catalysed reaction is a lipid A disaccharide + ATP = a lipid IVA + ADP + H(+). It functions in the pathway glycolipid biosynthesis; lipid IV(A) biosynthesis; lipid IV(A) from (3R)-3-hydroxytetradecanoyl-[acyl-carrier-protein] and UDP-N-acetyl-alpha-D-glucosamine: step 6/6. Transfers the gamma-phosphate of ATP to the 4'-position of a tetraacyldisaccharide 1-phosphate intermediate (termed DS-1-P) to form tetraacyldisaccharide 1,4'-bis-phosphate (lipid IVA). In Enterobacter sp. (strain 638), this protein is Tetraacyldisaccharide 4'-kinase.